A 240-amino-acid chain; its full sequence is Enoyl-CoA delta isomerase 1, peroxisomal (240 aa).

A Microbody targeting signal motif is present at residues serine 238 to leucine 240.

This sequence belongs to the enoyl-CoA hydratase/isomerase family.

The protein localises to the peroxisome. It catalyses the reaction a (3Z)-enoyl-CoA = a 4-saturated (2E)-enoyl-CoA. It carries out the reaction a (3E)-enoyl-CoA = a 4-saturated (2E)-enoyl-CoA. Its pathway is lipid metabolism; fatty acid beta-oxidation. Functionally, able to isomerize both 3-cis and 3-trans double bonds into the 2-trans form in a range of enoyl-CoA species. Essential for the beta oxidation of unsaturated fatty acids. In Arabidopsis thaliana (Mouse-ear cress), this protein is Enoyl-CoA delta isomerase 1, peroxisomal.